A 33-amino-acid chain; its full sequence is Cytochrome b6-f complex subunit 5 (33 aa).

The helical transmembrane segment at 5–25 threads the bilayer; it reads LLFGIILGLISCVLAGLFVSA.

Belongs to the PetG family. The 4 large subunits of the cytochrome b6-f complex are cytochrome b6, subunit IV (17 kDa polypeptide, PetD), cytochrome f and the Rieske protein, while the 4 small subunits are PetG, PetL, PetM and PetN. The complex functions as a dimer.

The protein resides in the plastid. The protein localises to the chloroplast thylakoid membrane. In terms of biological role, component of the cytochrome b6-f complex, which mediates electron transfer between photosystem II (PSII) and photosystem I (PSI), cyclic electron flow around PSI, and state transitions. PetG is required for either the stability or assembly of the cytochrome b6-f complex. This is Cytochrome b6-f complex subunit 5 from Bigelowiella natans (Pedinomonas minutissima).